We begin with the raw amino-acid sequence, 148 residues long: [Ribosomal protein bS18]-alanine N-acetyltransferase (148 aa).

The N-acetyltransferase domain maps to Asn2–Ser147. Residues Ile69–Val71 and Arg77–Arg82 contribute to the acetyl-CoA site. The active-site Proton acceptor is Glu103. Asn108 lines the acetyl-CoA pocket. Tyr115 functions as the Proton donor in the catalytic mechanism.

The protein belongs to the acetyltransferase family. RimI subfamily.

Its subcellular location is the cytoplasm. The enzyme catalyses N-terminal L-alanyl-[ribosomal protein bS18] + acetyl-CoA = N-terminal N(alpha)-acetyl-L-alanyl-[ribosomal protein bS18] + CoA + H(+). Its function is as follows. Acetylates the N-terminal alanine of ribosomal protein bS18. This chain is [Ribosomal protein bS18]-alanine N-acetyltransferase, found in Salmonella typhimurium (strain LT2 / SGSC1412 / ATCC 700720).